The primary structure comprises 463 residues: MSDTVIIAGGGPVGLMLACELGLAGVDTVVLERHDAPREPSRGGAINATVVELFTQRGIMESLRDDGFEFRMAHFAHIPLAPERVPGDRAFSFAVPHAQVERRLEERARSLGVRVRRSTEITSVRQTPDGVQVTTGDGEVVEGAYLVGCDGSASLVREQAGIPFPGVDPDFHGLWGDIKVEPGAPVLERIGARQYELGLCMVAPIGPDTVRVITGEFDVPSPPADQEVGFDELRAAVARIAGVELDGVPGWLSRWTATSRQAERYREGRILLAGDAAHTLFPLGGQALGTGIEDAVNLGWKLAATVQGWAPPSLLDSYHEERHAAGARACASTRAQTTIMRSLARVGELRALLTELAGLEEVNAYLVRMVGGIDGSRLPDVPLVTAEGETSVYRLLEAGRGVLLDLGAGLPAVRHPQVTYVRAEPTNRLDATAVLLRPDGVVAWRAPQDGLEAALETWFGPAA.

FAD contacts are provided by residues Val-13, 32–33, Ile-121, and Asp-275; that span reads ER.

The protein belongs to the PheA/TfdB FAD monooxygenase family. As to quaternary structure, homodimer. FAD is required as a cofactor.

The enzyme catalyses 4-[(2E,7S,8E,10E,13R,14R,16E,18E)-14-ethyl-7,13-dihydroxy-2,16,18-trimethylicosa-2,8,10,16,18-pentaenoyl]-2-methylidene-5-oxo-2,5-dihydro-1H-pyrrol-3-olate = 4-[(1R,2R,4aS,5S,8aR)-2-[(2R,3R,5E,7E)-3-ethyl-2-hydroxy-5,7-dimethylnona-5,7-dien-1-yl]-5-hydroxy-1-methyl-1,2,4a,5,6,7,8,8a-octahydronaphthalene-1-carbonyl]-2-methylidene-5-oxo-2,5-dihydro-1H-pyrrol-3-olate. The protein operates within antibiotic biosynthesis. In terms of biological role, involved in the biosynthesis of the spirotetramate antibiotics pyrroindomycins. Catalyzes the intramolecular cyclization forming the dialkyldecalin moiety in pyrroindomycins, via an endo-selective [4+2] cycloaddition reaction. This chain is Dialkyldecalin synthase, found in Streptomyces rugosporus.